The following is a 450-amino-acid chain: MREVISVHIGQGGIQVGNACWELFCLEHGIQPDGQMPSDKTIGGGDDAFNTFFSETGAGKHVPRAVLVDLEPTVCDEIRTGTYRQLFHPEQIISGKEDAANNFARGHYTIGKEIVDLVLDRIRKLADNCTGLQGFIGFHSVGGGTGSGLGSLLLERLSVDYGKKSKLCFTVYPSPQVSTAVVEPYNSVLSTHSLLEHTDVAVMLDNEAVYDICRRNLDIERPTYTNLNRLIAQVISSLTASLRFDGALNVDITEFQTNLVPYPRIHFMLSSYGPVISAEKAYHEQLSVAEITNSSFEPASMMAKCDPRHGKYMACCMMFRGDVVPKDVNAAVATIKTKRTIQFVDWSPGFKVGINYQPPTVVPGGDLAKVMRAVCMISNSTAIAEVFSRIDHKFDLMYAKRAFVHWYVGEGMEEGEFSEAREDLAALEKDYEEVGIETAEGEGEEEDMAQ.

Residue Gln11 participates in GTP binding. Lys40 is subject to N6-acetyllysine. Glu71, Ser140, Gly144, Thr145, Thr179, Asn206, and Asn228 together coordinate GTP. Glu71 contributes to the Mg(2+) binding site. Glu254 is a catalytic residue.

The protein belongs to the tubulin family. Dimer of alpha and beta chains. A typical microtubule is a hollow water-filled tube with an outer diameter of 25 nm and an inner diameter of 15 nM. Alpha-beta heterodimers associate head-to-tail to form protofilaments running lengthwise along the microtubule wall with the beta-tubulin subunit facing the microtubule plus end conferring a structural polarity. Microtubules usually have 13 protofilaments but different protofilament numbers can be found in some organisms and specialized cells. Requires Mg(2+) as cofactor. In terms of processing, acetylation of alpha chains at Lys-40 stabilizes microtubules and affects affinity and processivity of microtubule motors. This modification has a role in multiple cellular functions, ranging from cell motility, cell cycle progression or cell differentiation to intracellular trafficking and signaling.

The protein localises to the cytoplasm. It is found in the cytoskeleton. The catalysed reaction is GTP + H2O = GDP + phosphate + H(+). In terms of biological role, tubulin is the major constituent of microtubules, a cylinder consisting of laterally associated linear protofilaments composed of alpha- and beta-tubulin heterodimers. Microtubules grow by the addition of GTP-tubulin dimers to the microtubule end, where a stabilizing cap forms. Below the cap, tubulin dimers are in GDP-bound state, owing to GTPase activity of alpha-tubulin. In Euplotes vannus (Marine ciliate), this protein is Tubulin alpha chain.